A 279-amino-acid chain; its full sequence is Calcium-activated potassium channel subunit beta-3 (279 aa).

The Cytoplasmic segment spans residues 1–60 (MDFSPSSELGFHFVAFILLTRHRTAFPASGKKRETDYSDGDPLDVHKRLPSSAGEDRAVM). A helical membrane pass occupies residues 61–81 (LGFAMMGFSVLMFFLLGTTIL). Over 82–207 (KPFMLSIQRE…DVILIKKYDQ (126 aa)) the chain is Extracellular. A glycan (N-linked (GlcNAc...) asparagine) is linked at N131. A helical transmembrane segment spans residues 208–228 (MAIFHCLFWPSLTLLGGALIV). Residues 229-279 (GMVRLTQHLSLLCEKYSTVVRDEVGGKVPYIEQHQFKLCIMRRSKGRAEKS) lie on the Cytoplasmic side of the membrane.

This sequence belongs to the KCNMB (TC 8.A.14.1) family. KCNMB3 subfamily. Interacts with KCNMA1 tetramer. There are probably 4 molecules of KCMNB3 per KCNMA1 tetramer. N-glycosylated. Post-translationally, the extracellular domain contains disulfide bond essential for the gating mechanism. Isoform 1, isoform 3 and isoform 4 are widely expressed. Isoform 2 is expressed placenta, pancreas, kidney and heart. Isoform 1 and isoform 3 are highly expressed in pancreas and testis.

It is found in the membrane. In terms of biological role, regulatory subunit of the calcium activated potassium KCNMA1 (maxiK) channel. Modulates the calcium sensitivity and gating kinetics of KCNMA1, thereby contributing to KCNMA1 channel diversity. Alters the functional properties of the current expressed by the KCNMA1 channel. Isoform 2, isoform 3 and isoform 4 partially inactivate the current of KCNBMA. Isoform 4 induces a fast and incomplete inactivation of KCNMA1 channel that is detectable only at large depolarizations. In contrast, isoform 1 does not induce detectable inactivation of KCNMA1. Two or more subunits of KCNMB3 are required to block the KCNMA1 tetramer. This is Calcium-activated potassium channel subunit beta-3 (KCNMB3) from Homo sapiens (Human).